The primary structure comprises 332 residues: 2,3-diketo-L-gulonate reductase (332 aa).

The active-site Proton donor is the His-44. NAD(+)-binding positions include 168-174 (ITMVDMS), 224-225 (WK), and 304-306 (GHE).

Belongs to the LDH2/MDH2 oxidoreductase family. DlgD subfamily. Homodimer.

It localises to the cytoplasm. The enzyme catalyses 3-dehydro-L-gulonate + NAD(+) = 2,3-dioxo-L-gulonate + NADH + H(+). The catalysed reaction is 3-dehydro-L-gulonate + NADP(+) = 2,3-dioxo-L-gulonate + NADPH + H(+). Functionally, catalyzes the reduction of 2,3-diketo-L-gulonate in the presence of NADH, to form 3-keto-L-gulonate. The polypeptide is 2,3-diketo-L-gulonate reductase (Salmonella agona (strain SL483)).